A 302-amino-acid chain; its full sequence is Haloalkane dehalogenase (302 aa).

The AB hydrolase-1 domain occupies 48 to 152; it reads PILLMHGEPS…VVVSNTGLPI (105 aa). The active-site Nucleophile is Asp-123. The active-site Proton donor is Asp-249. The active-site Proton acceptor is His-278.

Belongs to the haloalkane dehalogenase family. Type 1 subfamily. As to quaternary structure, monomer.

It catalyses the reaction 1-haloalkane + H2O = a halide anion + a primary alcohol + H(+). Catalyzes hydrolytic cleavage of carbon-halogen bonds in halogenated aliphatic compounds, leading to the formation of the corresponding primary alcohols, halide ions and protons. This chain is Haloalkane dehalogenase, found in Caulobacter vibrioides (strain ATCC 19089 / CIP 103742 / CB 15) (Caulobacter crescentus).